Here is a 25-residue protein sequence, read N- to C-terminus: GLVNGLLSSVLGGGQGGGGLLGGIL.

The protein belongs to the frog skin active peptide (FSAP) family. Plasticin subfamily. In terms of tissue distribution, expressed by the skin glands.

The protein localises to the secreted. Its subcellular location is the target cell membrane. May play an immunomodulatory role in frog skin in response to microbial pathogens, since it increases the production of the pro-inflammatory cytokines TNF-alpha, IL-1 beta, IL-12, and IL-23 by mouse peritoneal macrophages and has no effect on the production of the anti-inflammatory cytokine IL-10. It is not known whether stimulation of cytokine production arises from a non-specific interaction of the peptide with the macrophage membrane or from interaction with a specific receptor. Shows a low activity in stimulating insulin release from rat BRIN-BD11 beta cells, and acts without loss of integrity of the plasma membrane. Shows a marked affinity for both neutral and anionic membranes models. Does not show antibacterial (E.coli and S.aureus). Does not show hemolytic activity against human erythrocytes. The protein is Plasticin-L1 of Leptodactylus laticeps (Santa Fe frog).